A 49-amino-acid polypeptide reads, in one-letter code: MERSHVKRLPQLGHNIFAWKINIDEVSLLLKFCRSCNIFWSCSNSFFDM.

This is an uncharacterized protein from Bacillus subtilis (Bacteriophage phi-105).